Reading from the N-terminus, the 424-residue chain is Gamma-glutamyl phosphate reductase (424 aa).

The protein belongs to the gamma-glutamyl phosphate reductase family.

Its subcellular location is the cytoplasm. It catalyses the reaction L-glutamate 5-semialdehyde + phosphate + NADP(+) = L-glutamyl 5-phosphate + NADPH + H(+). The protein operates within amino-acid biosynthesis; L-proline biosynthesis; L-glutamate 5-semialdehyde from L-glutamate: step 2/2. Its function is as follows. Catalyzes the NADPH-dependent reduction of L-glutamate 5-phosphate into L-glutamate 5-semialdehyde and phosphate. The product spontaneously undergoes cyclization to form 1-pyrroline-5-carboxylate. The chain is Gamma-glutamyl phosphate reductase from Halorhodospira halophila (strain DSM 244 / SL1) (Ectothiorhodospira halophila (strain DSM 244 / SL1)).